Consider the following 970-residue polypeptide: Phosphoenolpyruvate carboxylase 1 (970 aa).

Ser-15 bears the Phosphoserine mark. Residues His-177, Lys-606, and Arg-647 contribute to the active site.

This sequence belongs to the PEPCase type 1 family. In terms of assembly, homotetramer. The cofactor is Mg(2+).

It is found in the cytoplasm. The enzyme catalyses oxaloacetate + phosphate = phosphoenolpyruvate + hydrogencarbonate. The protein operates within photosynthesis; C4 acid pathway. By light-reversible phosphorylation. In terms of biological role, through the carboxylation of phosphoenolpyruvate (PEP) it forms oxaloacetate, a four-carbon dicarboxylic acid source for the tricarboxylic acid cycle. In Zea mays (Maize), this protein is Phosphoenolpyruvate carboxylase 1 (PEP1).